A 248-amino-acid polypeptide reads, in one-letter code: Protein LIFEGUARD 3 (248 aa).

The next 7 membrane-spanning stretches (helical) occupy residues 42–62, 74–94, 105–125, 130–150, 165–185, 188–208, and 222–242; these read VYSIIAFQLLATVAVAATVVT, GLGLALYIVIIITPLIVLCPL, YLLLGIFTLALAFVVGLTCAF, VILESVILTSVVVLSLTLYTF, FLFGALTVLIFFALIQILFPL, VSVMIYGCLVSIIFCGYIVYD, and IWAAVSLYLDIINLFLYLLTV.

It belongs to the BI1 family.

The protein localises to the membrane. The polypeptide is Protein LIFEGUARD 3 (Arabidopsis thaliana (Mouse-ear cress)).